A 461-amino-acid chain; its full sequence is Photosystem II CP43 reaction center protein (461 aa).

Residues Met-1–Glu-2 constitute a propeptide that is removed on maturation. Residue Thr-3 is modified to N-acetylthreonine. The residue at position 3 (Thr-3) is a Phosphothreonine. 5 helical membrane-spanning segments follow: residues Leu-57–Ala-81, Leu-122–Asn-143, Lys-166–Thr-188, Lys-243–Ser-263, and Trp-279–Ser-300. Glu-355 is a binding site for [CaMn4O5] cluster. A helical transmembrane segment spans residues Arg-435 to Pro-459.

Belongs to the PsbB/PsbC family. PsbC subfamily. As to quaternary structure, PSII is composed of 1 copy each of membrane proteins PsbA, PsbB, PsbC, PsbD, PsbE, PsbF, PsbH, PsbI, PsbJ, PsbK, PsbL, PsbM, PsbT, PsbX, PsbY, PsbZ, Psb30/Ycf12, at least 3 peripheral proteins of the oxygen-evolving complex and a large number of cofactors. It forms dimeric complexes. Requires Binds multiple chlorophylls and provides some of the ligands for the Ca-4Mn-5O cluster of the oxygen-evolving complex. It may also provide a ligand for a Cl- that is required for oxygen evolution. PSII binds additional chlorophylls, carotenoids and specific lipids. as cofactor.

It localises to the plastid. It is found in the chloroplast thylakoid membrane. In terms of biological role, one of the components of the core complex of photosystem II (PSII). It binds chlorophyll and helps catalyze the primary light-induced photochemical processes of PSII. PSII is a light-driven water:plastoquinone oxidoreductase, using light energy to abstract electrons from H(2)O, generating O(2) and a proton gradient subsequently used for ATP formation. In Tupiella akineta (Green alga), this protein is Photosystem II CP43 reaction center protein.